Consider the following 113-residue polypeptide: Large ribosomal subunit protein P1 (113 aa).

Residues 56 to 66 (TAAAAPAPAAG) are compositionally biased toward low complexity. A disordered region spans residues 56-113 (TAAAAPAPAAGGSAGGEVEAADDDDEEDAEEEAADEGGDDDGDDDEEADGEGLGALFG). Acidic residues predominate over residues 74 to 105 (EAADDDDEEDAEEEAADEGGDDDGDDDEEADG).

The protein belongs to the eukaryotic ribosomal protein P1/P2 family. Part of the 50S ribosomal subunit. Homodimer, it forms part of the ribosomal stalk which helps the ribosome interact with GTP-bound translation factors. Forms a heptameric uL10/P0(P1)2(P1)2(P1)2 complex, where uL10/P0 forms an elongated spine to which the P1 dimers bind in a sequential fashion.

Functionally, forms part of the ribosomal stalk, playing a central role in the interaction of the ribosome with GTP-bound translation factors. This chain is Large ribosomal subunit protein P1, found in Haloferax volcanii (strain ATCC 29605 / DSM 3757 / JCM 8879 / NBRC 14742 / NCIMB 2012 / VKM B-1768 / DS2) (Halobacterium volcanii).